A 228-amino-acid polypeptide reads, in one-letter code: 7-cyano-7-deazaguanine synthase (228 aa).

7 to 17 serves as a coordination point for ATP; the sequence is LSGGMDSLVTT. Zn(2+) contacts are provided by Cys-187, Cys-195, Cys-198, and Cys-201.

Belongs to the QueC family. Zn(2+) is required as a cofactor.

The enzyme catalyses 7-carboxy-7-deazaguanine + NH4(+) + ATP = 7-cyano-7-deazaguanine + ADP + phosphate + H2O + H(+). Its pathway is purine metabolism; 7-cyano-7-deazaguanine biosynthesis. Catalyzes the ATP-dependent conversion of 7-carboxy-7-deazaguanine (CDG) to 7-cyano-7-deazaguanine (preQ(0)). The chain is 7-cyano-7-deazaguanine synthase from Chlorobium chlorochromatii (strain CaD3).